The sequence spans 156 residues: ATP synthase subunit b (156 aa).

The chain crosses the membrane as a helical span at residues 11–31 (AIAFVLFVIFCMKYVWPPIMA).

This sequence belongs to the ATPase B chain family. F-type ATPases have 2 components, F(1) - the catalytic core - and F(0) - the membrane proton channel. F(1) has five subunits: alpha(3), beta(3), gamma(1), delta(1), epsilon(1). F(0) has three main subunits: a(1), b(2) and c(10-14). The alpha and beta chains form an alternating ring which encloses part of the gamma chain. F(1) is attached to F(0) by a central stalk formed by the gamma and epsilon chains, while a peripheral stalk is formed by the delta and b chains.

The protein resides in the cell inner membrane. F(1)F(0) ATP synthase produces ATP from ADP in the presence of a proton or sodium gradient. F-type ATPases consist of two structural domains, F(1) containing the extramembraneous catalytic core and F(0) containing the membrane proton channel, linked together by a central stalk and a peripheral stalk. During catalysis, ATP synthesis in the catalytic domain of F(1) is coupled via a rotary mechanism of the central stalk subunits to proton translocation. In terms of biological role, component of the F(0) channel, it forms part of the peripheral stalk, linking F(1) to F(0). The protein is ATP synthase subunit b of Yersinia pseudotuberculosis serotype O:1b (strain IP 31758).